We begin with the raw amino-acid sequence, 224 residues long: Putative gastrointestinal growth factor xP4 (224 aa).

The signal sequence occupies residues 1–17; that stretch reads MANSVFWAIAVALVLGA. 4 consecutive P-type domains span residues 25 to 68, 73 to 117, 123 to 167, and 173 to 216; these read YRCG…YTPW, TICN…YQPI, RDCS…FKPE, and LQCA…FYPD. Disulfide bonds link C27–C53, C37–C52, C47–C64, C75–C102, C86–C101, C96–C113, C125–C152, C136–C151, C146–C163, C175–C201, C185–C200, and C195–C212. N104 carries N-linked (GlcNAc...) asparagine glycosylation.

Glycosylated. In terms of tissue distribution, stomach mucosa.

The protein localises to the secreted. Functionally, may act as a growth factor. The polypeptide is Putative gastrointestinal growth factor xP4 (p4) (Xenopus laevis (African clawed frog)).